Consider the following 168-residue polypeptide: SPbeta prophage-derived uncharacterized protein YonX (168 aa).

The stretch at 1–53 forms a coiled coil; the sequence is MNAQLFNLESRLDELENEINTQYCELDTNLDALKSNRIELESQLEKFESSLTN.

This Bacillus subtilis (strain 168) protein is SPbeta prophage-derived uncharacterized protein YonX (yonX).